The chain runs to 362 residues: tRNA/tmRNA (uracil-C(5))-methyltransferase (362 aa).

Glutamine 182, tyrosine 210, asparagine 215, glutamate 231, and aspartate 293 together coordinate S-adenosyl-L-methionine. The active-site Nucleophile is cysteine 318. Catalysis depends on glutamate 352, which acts as the Proton acceptor.

The protein belongs to the class I-like SAM-binding methyltransferase superfamily. RNA M5U methyltransferase family. TrmA subfamily.

The enzyme catalyses uridine(54) in tRNA + S-adenosyl-L-methionine = 5-methyluridine(54) in tRNA + S-adenosyl-L-homocysteine + H(+). It carries out the reaction uridine(341) in tmRNA + S-adenosyl-L-methionine = 5-methyluridine(341) in tmRNA + S-adenosyl-L-homocysteine + H(+). Its function is as follows. Dual-specificity methyltransferase that catalyzes the formation of 5-methyluridine at position 54 (m5U54) in all tRNAs, and that of position 341 (m5U341) in tmRNA (transfer-mRNA). This chain is tRNA/tmRNA (uracil-C(5))-methyltransferase, found in Neisseria gonorrhoeae (strain ATCC 700825 / FA 1090).